Reading from the N-terminus, the 466-residue chain is DNA polymerase delta subunit 3 (466 aa).

At A2 the chain carries N-acetylalanine. 2 disordered regions span residues 169–188 and 199–232; these read NNELTTNGHGPPASKQVSQQ and KAAAKTQETNKETKTEAKEVTNASAAGNKAPGKG. The segment covering 206-217 has biased composition (basic and acidic residues); the sequence is ETNKETKTEAKE. K258 is covalently cross-linked (Glycyl lysine isopeptide (Lys-Gly) (interchain with G-Cter in SUMO); alternate). A Glycyl lysine isopeptide (Lys-Gly) (interchain with G-Cter in SUMO2); alternate cross-link involves residue K258. A Glycyl lysine isopeptide (Lys-Gly) (interchain with G-Cter in SUMO2) cross-link involves residue K261. 2 disordered regions span residues 274 to 393 and 406 to 466; these read KLAT…KTYL and ESES…FQRK. Residue T277 is modified to Phosphothreonine. Residues 286–296 show a composition bias toward basic and acidic residues; that stretch reads KKAEPVKVLQK. Residue S307 is modified to Phosphoserine. Residues 349 to 361 are compositionally biased toward pro residues; the sequence is PSPPPPPSPPLEP. Phosphoserine occurs at positions 407 and 409. At T411 the chain carries Phosphothreonine. S413 is modified (phosphoserine). Residues 432 to 441 show a composition bias toward basic and acidic residues; that stretch reads VKKEPREERK. Residue K433 forms a Glycyl lysine isopeptide (Lys-Gly) (interchain with G-Cter in SUMO); alternate linkage. K433 is covalently cross-linked (Glycyl lysine isopeptide (Lys-Gly) (interchain with G-Cter in SUMO2); alternate). Residues 455–466 are compositionally biased toward polar residues; that stretch reads RQVSITGFFQRK. The short motif at 456–463 is the PIP-box element; it reads QVSITGFF. S458 is modified (phosphoserine).

As to quaternary structure, component of both the DNA polymerase delta and DNA polymerase zeta complexes. The tetrameric DNA polymerase delta complex (Pol-delta4), which consists of POLD1/p125, POLD2/p50, POLD3/p66/p68 and POLD4/p12, with POLD1 bearing DNA polymerase and 3' to 5' proofreading exonuclease activities. Within this complex, directly interacts with POLD2. Following stress caused by DNA damaging agents or by replication stress, POLD4 is degraded and Pol-delta4 is converted into a trimeric form of the complex (Pol-delta3), which consists of POLD1, POLD2 and POLD3. Pol-delta3 is the major form occurring at S phase replication sites, as well as DNA damage sites. Directly interacts with PCNA, as do POLD1 and POLD4; this interaction stimulates Pol-delta polymerase activity. POLD3 phosphorylation at Ser-458 impairs PCNA binding. Component of the DNA polymerase zeta complex (POLZ), which consists of REV3L, MAD2L2, POLD2 and POLD3, with REV3L bearing DNA polymerase catalytic activity. The DNA polymerase delta complex interacts with POLDIP2; this interaction is probably mediated through direct binding to POLD2. Ubiquitinated, but not targeted to the proteasome. Sumoylated. Sumoylation with SUMO3 may be predominant. In terms of processing, phosphorylation at Ser-458 is catalyzed in vitro by PKA. It is thought to decrease the affinity for PCNA and Pol-delta4 processivity. Can also be phosphorylated in vitro by CDK1-cyclin-A complex, as well as CDK2-cyclin-A and CDK2-cyclin-E complexes. PCNA interferes with CDK-cyclin phosphorylation.

The protein resides in the cytoplasm. It localises to the nucleus. In terms of biological role, accessory component of both the DNA polymerase delta complex and the DNA polymerase zeta complex. As a component of the trimeric and tetrameric DNA polymerase delta complexes (Pol-delta3 and Pol-delta4, respectively), plays a role in high fidelity genome replication, including in lagging strand synthesis, and repair. Required for optimal Pol-delta activity. Stabilizes the Pol-delta complex and plays a major role in Pol-delta stimulation by PCNA. Pol-delta3 and Pol-delta4 are characterized by the absence or the presence of POLD4. They exhibit differences in catalytic activity. Most notably, Pol-delta3 shows higher proofreading activity than Pol-delta4. Although both Pol-delta3 and Pol-delta4 process Okazaki fragments in vitro, Pol-delta3 may also be better suited to fulfill this task, exhibiting near-absence of strand displacement activity compared to Pol-delta4 and stalling on encounter with the 5'-blocking oligonucleotides. Pol-delta3 idling process may avoid the formation of a gap, while maintaining a nick that can be readily ligated. Along with DNA polymerase kappa, DNA polymerase delta carries out approximately half of nucleotide excision repair (NER) synthesis following UV irradiation. In this context, POLD3, along with PCNA and RFC1-replication factor C complex, is required to recruit POLD1, the catalytic subunit of the polymerase delta complex, to DNA damage sites. Under conditions of DNA replication stress, required for the repair of broken replication forks through break-induced replication (BIR). Involved in the translesion synthesis (TLS) of templates carrying O6-methylguanine or abasic sites performed by Pol-delta4, independently of DNA polymerase zeta (REV3L) or eta (POLH). Facilitates abasic site bypass by DNA polymerase delta by promoting extension from the nucleotide inserted opposite the lesion. Also involved in TLS, as a component of the tetrameric DNA polymerase zeta complex. Along with POLD2, dramatically increases the efficiency and processivity of DNA synthesis of the DNA polymerase zeta complex compared to the minimal zeta complex, consisting of only REV3L and REV7. This Homo sapiens (Human) protein is DNA polymerase delta subunit 3 (POLD3).